A 535-amino-acid chain; its full sequence is uncharacterized protein (535 aa).

Helical transmembrane passes span 55–75, 82–102, 115–135, 143–163, 201–221, and 346–366; these read LITI…IPII, FMPV…IMFV, IICF…ILRH, AFVL…LMLF, STIL…TLIM, and VSGP…NVFA.

The protein resides in the membrane. This is an uncharacterized protein from Schizosaccharomyces pombe (strain 972 / ATCC 24843) (Fission yeast).